We begin with the raw amino-acid sequence, 434 residues long: Pre-B-cell leukemia transcription factor 3 (434 aa).

The segment at serine 20–glycine 41 is disordered. Residues histidine 32–glycine 41 are compositionally biased toward basic and acidic residues. The 194-residue stretch at glycine 41–aspartate 234 folds into the PBC domain. Residues aspartate 48 to glycine 127 form a PBC-A region. Residues alanine 130–aspartate 234 are PBC-B. Residues alanine 235–isoleucine 297 constitute a DNA-binding region (homeobox; TALE-type). The span at asparagine 326 to serine 341 shows a compositional bias: low complexity. Disordered regions lie at residues asparagine 326–aspartate 349 and leucine 403–asparagine 434. Polar residues predominate over residues leucine 403–threonine 422.

It belongs to the TALE/PBX homeobox family. In terms of assembly, interacts with PBXIP1. In terms of tissue distribution, ubiquitously expressed.

The protein localises to the nucleus. Its function is as follows. Transcriptional activator that binds the sequence 5'-ATCAATCAA-3'. This chain is Pre-B-cell leukemia transcription factor 3 (PBX3), found in Homo sapiens (Human).